A 126-amino-acid chain; its full sequence is Glycine cleavage system H protein (126 aa).

The 83-residue stretch at 22 to 104 (VAYVGITDYA…YGKGWLIKIS (83 aa)) folds into the Lipoyl-binding domain. The residue at position 63 (K63) is an N6-lipoyllysine.

It belongs to the GcvH family. In terms of assembly, the glycine cleavage system is composed of four proteins: P, T, L and H. Requires (R)-lipoate as cofactor.

In terms of biological role, the glycine cleavage system catalyzes the degradation of glycine. The H protein shuttles the methylamine group of glycine from the P protein to the T protein. This is Glycine cleavage system H protein from Parabacteroides distasonis (strain ATCC 8503 / DSM 20701 / CIP 104284 / JCM 5825 / NCTC 11152).